The following is a 149-amino-acid chain: Calmodulin (149 aa).

Ala-2 is subject to N-acetylalanine. EF-hand domains follow at residues 8–43 (EQIAEFKEAFSLFDKDGDGTITTKELGTVMRSLGQN), 44–79 (PTEAELQDMINEVDADGNGTIDFPEFLTMMARKMKD), 81–116 (DSEEEIREAFRVFDKDGNGYISAAELRHVMTNLGEK), and 117–149 (LTDEEVDEMIREADIDGDGQVNYEEFVQIMTAK). The Ca(2+) site is built by Asp-21, Asp-23, Asp-25, Thr-27, Glu-32, Asp-57, Asp-59, Asn-61, Thr-63, Glu-68, Asp-94, Asp-96, Asn-98, Tyr-100, and Glu-105. At Lys-116 the chain carries N6,N6,N6-trimethyllysine. Ca(2+) is bound by residues Asp-130, Asp-132, Asp-134, Gln-136, and Glu-141.

Belongs to the calmodulin family.

Calmodulin acts as part of a calcium signal transduction pathway by mediating the control of a large number of enzymes, ion channels, aquaporins and other proteins through calcium-binding. Calcium-binding is required for the activation of calmodulin. Among the enzymes to be stimulated by the calmodulin-calcium complex are a number of protein kinases, such as myosin light-chain kinases and calmodulin-dependent protein kinase type II (CaMK2), and phosphatases. This is Calmodulin (calm) from Epinephelus akaara (Hong Kong grouper).